The following is a 637-amino-acid chain: Biosynthetic arginine decarboxylase (637 aa).

Lys107 is subject to N6-(pyridoxal phosphate)lysine. 289–299 (LDVGGGLGVDY) contributes to the substrate binding site.

This sequence belongs to the Orn/Lys/Arg decarboxylase class-II family. SpeA subfamily. The cofactor is Mg(2+). Requires pyridoxal 5'-phosphate as cofactor.

It carries out the reaction L-arginine + H(+) = agmatine + CO2. Functionally, catalyzes the biosynthesis of agmatine from arginine. The chain is Biosynthetic arginine decarboxylase from Thermosynechococcus vestitus (strain NIES-2133 / IAM M-273 / BP-1).